A 210-amino-acid polypeptide reads, in one-letter code: dTTP/UTP pyrophosphatase (210 aa).

Residues 1–15 (MTHGDNRDGPGRETR) show a composition bias toward basic and acidic residues. The interval 1–22 (MTHGDNRDGPGRETRSSGPLVL) is disordered. The active-site Proton acceptor is the aspartate 86.

The protein belongs to the Maf family. YhdE subfamily. Requires a divalent metal cation as cofactor.

It localises to the cytoplasm. It carries out the reaction dTTP + H2O = dTMP + diphosphate + H(+). It catalyses the reaction UTP + H2O = UMP + diphosphate + H(+). Its function is as follows. Nucleoside triphosphate pyrophosphatase that hydrolyzes dTTP and UTP. May have a dual role in cell division arrest and in preventing the incorporation of modified nucleotides into cellular nucleic acids. In Rhodospirillum rubrum (strain ATCC 11170 / ATH 1.1.1 / DSM 467 / LMG 4362 / NCIMB 8255 / S1), this protein is dTTP/UTP pyrophosphatase.